Consider the following 129-residue polypeptide: Transcriptional activator protein (129 aa).

The segment covering 1–12 (MRSSSPSQPPSI) has biased composition (low complexity). Residues 1–23 (MRSSSPSQPPSIKKAHRQAKKRA) are disordered. Basic residues predominate over residues 13 to 23 (KKAHRQAKKRA). Positions 13–28 (KKAHRQAKKRAIRRRR) match the Nuclear localization signal motif. A zinc finger lies at 33-50 (CGCSIYFHIDCAGHGFTH). The tract at residues 73 to 117 (LFQDKPSRGHAIHQDQDIQRPNPVQPQPQESIGSPQSIPELPSLD) is disordered. Residues 99 to 109 (QPQESIGSPQS) show a composition bias toward polar residues. The segment at 115 to 129 (SLDDIDDSFWVELFS) is transactivation.

It belongs to the geminiviridae transcriptional activator protein family. In terms of assembly, monomer. Homodimer. Homooligomer. Self-interaction correlates with nuclear localization and efficient activation of transcription. Monomers suppress local silencing by interacting with and inactivating host adenosine kinase 2 (ADK2) in the cytoplasm. Interacts with and inhibits host SNF1 kinase. Binds to ssDNA. Phosphorylated.

It localises to the host nucleus. The protein localises to the host cytoplasm. In terms of biological role, strong activator of the late viral genes promoters. Enhances the expression of the capsid protein and nuclear shuttle protein. Acts as a suppressor of RNA-mediated gene silencing, also known as post-transcriptional gene silencing (PTGS), a mechanism of plant viral defense that limits the accumulation of viral RNAs. Suppresses the host RNA silencing by inhibiting adenosine kinase 2 (ADK2), a kinase involved in a general methylation pathway. Also suppresses the host basal defense by interacting with and inhibiting SNF1 kinase, a key regulator of cell metabolism implicated in innate antiviral defense. Determines pathogenicity. The protein is Transcriptional activator protein of Solanum tuberosum (Potato).